Reading from the N-terminus, the 103-residue chain is Protein SUP-1 (103 aa).

Positions 1-16 (MMSYIALAACIGLAMA) are cleaved as a signal peptide. Topologically, residues 17–75 (ANVDHDVKSAVNEVTTTKDGDTYCPVPLVGTKCGTSSIFHYWKCCGELNKECCFNLQTW) are extracellular. A helical transmembrane segment spans residues 76-96 (VWVTLALFGVIFIASFVISLV). Topologically, residues 97 to 103 (RCICCRK) are cytoplasmic.

As to expression, expressed in a subset of neurons and in body wall muscles. In the nervous system, expressed specifically in cholinergic motor neurons of the ventral nerve cord, a subset of cholinergic head neurons, anterior sublateral neurons, and body sublateral neurons (at protein level).

The protein resides in the cell membrane. It localises to the perikaryon. It is found in the cell projection. The protein localises to the synapse. Its subcellular location is the cytoplasmic vesicle. The protein resides in the secretory vesicle. It localises to the synaptic vesicle. Functionally, may be involved in trafficking or stabilization of the vesicular acetylcholine transporter unc-17. The protein is Protein SUP-1 of Caenorhabditis elegans.